Here is a 498-residue protein sequence, read N- to C-terminus: ATP synthase subunit beta, chloroplastic (498 aa).

Phosphothreonine is present on threonine 6. Serine 13 carries the phosphoserine modification. 172-179 is an ATP binding site; sequence GGAGVGKT.

The protein belongs to the ATPase alpha/beta chains family. As to quaternary structure, F-type ATPases have 2 components, CF(1) - the catalytic core - and CF(0) - the membrane proton channel. CF(1) has five subunits: alpha(3), beta(3), gamma(1), delta(1), epsilon(1). CF(0) has four main subunits: a(1), b(1), b'(1) and c(9-12).

Its subcellular location is the plastid. It is found in the chloroplast thylakoid membrane. The catalysed reaction is ATP + H2O + 4 H(+)(in) = ADP + phosphate + 5 H(+)(out). Produces ATP from ADP in the presence of a proton gradient across the membrane. The catalytic sites are hosted primarily by the beta subunits. The sequence is that of ATP synthase subunit beta, chloroplastic from Arabis hirsuta (Hairy rock-cress).